The sequence spans 434 residues: Perilipin-3 (434 aa).

Positions 1–22 (MSADGAEADGSTQVTVEEPVQQ) are disordered. Position 2 is an N-acetylserine (Ser-2). The residue at position 31 (Ser-31) is a Phosphoserine. N6-acetyllysine is present on Lys-65. At Ser-91 the chain carries Phosphoserine. Residue Lys-122 forms a Glycyl lysine isopeptide (Lys-Gly) (interchain with G-Cter in SUMO1) linkage. 2 positions are modified to phosphoserine: Ser-130 and Ser-148. Thr-170 carries the phosphothreonine modification. A phosphoserine mark is found at Ser-175 and Ser-179. Thr-216 carries the phosphothreonine modification. Residues Ser-217 and Ser-241 each carry the phosphoserine modification. Phosphotyrosine is present on Tyr-251. Coiled coils occupy residues 252–277 (EHSLGKLRATKQRAQEALLQLSQVLS) and 353–377 (TNVKDQVQQARRQVEDLQATFSSIH).

The protein belongs to the perilipin family. Homooligomer. Interacts with M6PR (via the cytoplasmic domain). Interacts with IGF2R (via the cytoplasmic domain). In terms of assembly, may exist as a homodimer. Post-translationally, phosphorylation at Tyr-251 by isoform 1 of CHKA (CHKalpha2) promotes dissociation from lipid droplets: dissociation is followed by recruitment of autophagosome machinery to lipid droplets and subsequent lipid droplet lipolysis.

It is found in the lipid droplet. It localises to the endosome membrane. Its subcellular location is the cytoplasm. Functionally, structural component of lipid droplets, which is required for the formation and maintenance of lipid storage droplets. Required for the transport of mannose 6-phosphate receptors (MPR) from endosomes to the trans-Golgi network. The polypeptide is Perilipin-3 (PLIN3) (Homo sapiens (Human)).